We begin with the raw amino-acid sequence, 219 residues long: Small ribosomal subunit protein uS3c (219 aa).

A KH type-2 domain is found at 43 to 120 (IQNYIQKNMQ…KINITITKIT (78 aa)).

The protein belongs to the universal ribosomal protein uS3 family. In terms of assembly, part of the 30S ribosomal subunit.

The protein resides in the plastid. It localises to the chloroplast. The protein is Small ribosomal subunit protein uS3c (rps3) of Oenothera elata subsp. hookeri (Hooker's evening primrose).